Reading from the N-terminus, the 438-residue chain is Acid phosphatase type 7 (438 aa).

The first 26 residues, 1-26 (MHPLPGYWSCYCLLLLFSLGVQGSLG), serve as a signal peptide directing secretion. Fe cation is bound by residues Asp141, Asp170, and Tyr173. A Zn(2+)-binding site is contributed by Asp170. Asn205 provides a ligand contact to Zn(2+). N-linked (GlcNAc...) asparagine glycosylation is present at Asn211. Positions 286 and 333 each coordinate Zn(2+). His335 lines the Fe cation pocket. Residues Asn350 and Asn404 are each glycosylated (N-linked (GlcNAc...) asparagine).

The protein belongs to the metallophosphoesterase superfamily. Purple acid phosphatase family. It depends on Fe cation as a cofactor. Zn(2+) is required as a cofactor.

The protein localises to the secreted. The enzyme catalyses a phosphate monoester + H2O = an alcohol + phosphate. This Homo sapiens (Human) protein is Acid phosphatase type 7.